Consider the following 101-residue polypeptide: Small ribosomal subunit protein uS14 (101 aa).

Residues 44–74 are disordered; that stretch reads ASRKLSRLPRDSSPVRLRNRDQVDGRPRGYV. The segment covering 61-70 has biased composition (basic and acidic residues); the sequence is RNRDQVDGRP.

Belongs to the universal ribosomal protein uS14 family. As to quaternary structure, part of the 30S ribosomal subunit. Contacts proteins S3 and S10.

Functionally, binds 16S rRNA, required for the assembly of 30S particles and may also be responsible for determining the conformation of the 16S rRNA at the A site. This Cutibacterium acnes (strain DSM 16379 / KPA171202) (Propionibacterium acnes) protein is Small ribosomal subunit protein uS14.